A 184-amino-acid chain; its full sequence is Ethylene-responsive transcription factor ERF010 (184 aa).

The AP2/ERF DNA-binding region spans 20–77; that stretch reads PYKGIRMRKWGKWVAEIREPNKRSRLWLGSYSTPEAAARAYDTAVFYLRGPTARLNFP. Positions 123-184 are disordered; sequence QNRDSDVDNK…SSDEEWESKH (62 aa). Over residues 161 to 172 the composition is skewed to basic and acidic residues; it reads LLDRVDLNKLPD. Acidic residues predominate over residues 174–184; sequence ESSDEEWESKH.

The protein belongs to the AP2/ERF transcription factor family. ERF subfamily.

It is found in the nucleus. Its function is as follows. Probably acts as a transcriptional activator. Binds to the GCC-box pathogenesis-related promoter element. May be involved in the regulation of gene expression by stress factors and by components of stress signal transduction pathways. The polypeptide is Ethylene-responsive transcription factor ERF010 (ERF010) (Arabidopsis thaliana (Mouse-ear cress)).